Here is a 64-residue protein sequence, read N- to C-terminus: Beta-defensin 5 (64 aa).

Positions 1 to 23 (MKIHYLLFAFLLVLLSPLAGVFS) are cleaved as a signal peptide. Disulfide bonds link cysteine 32/cysteine 60, cysteine 39/cysteine 53, and cysteine 43/cysteine 61.

It belongs to the beta-defensin family.

The protein localises to the secreted. Its function is as follows. Has antibacterial activity. The sequence is that of Beta-defensin 5 (Defb5) from Mus musculus (Mouse).